Here is a 277-residue protein sequence, read N- to C-terminus: Undecaprenyl-diphosphatase (277 aa).

6 helical membrane-spanning segments follow: residues 44–64, 86–106, 110–130, 184–204, 215–235, and 250–270; these read RAMA…VWEF, GNLL…ADLI, LFNP…MLWA, AATE…AVYS, GDLP…MIAV, and FAWY…FGWV.

It belongs to the UppP family.

The protein localises to the cell inner membrane. It catalyses the reaction di-trans,octa-cis-undecaprenyl diphosphate + H2O = di-trans,octa-cis-undecaprenyl phosphate + phosphate + H(+). Its function is as follows. Catalyzes the dephosphorylation of undecaprenyl diphosphate (UPP). Confers resistance to bacitracin. The polypeptide is Undecaprenyl-diphosphatase (Pseudomonas putida (strain ATCC 47054 / DSM 6125 / CFBP 8728 / NCIMB 11950 / KT2440)).